We begin with the raw amino-acid sequence, 134 residues long: ATP synthase epsilon chain (134 aa).

It belongs to the ATPase epsilon chain family. In terms of assembly, F-type ATPases have 2 components, CF(1) - the catalytic core - and CF(0) - the membrane proton channel. CF(1) has five subunits: alpha(3), beta(3), gamma(1), delta(1), epsilon(1). CF(0) has three main subunits: a, b and c.

It is found in the cell membrane. In terms of biological role, produces ATP from ADP in the presence of a proton gradient across the membrane. The sequence is that of ATP synthase epsilon chain from Listeria welshimeri serovar 6b (strain ATCC 35897 / DSM 20650 / CCUG 15529 / CIP 8149 / NCTC 11857 / SLCC 5334 / V8).